The chain runs to 331 residues: D-alanine--D-alanine ligase (331 aa).

Residues 116 to 316 (KRQWQTHGLP…YEDFVLQLAA (201 aa)) form the ATP-grasp domain. Residue 142–197 (ADRLGLPLIVKPAREGSSIGLTKVTSVAELPAAYEKAARLDRDVMAEQFIEGDELT) participates in ATP binding. Residues Asp269, Glu283, and Asn285 each contribute to the Mg(2+) site.

It belongs to the D-alanine--D-alanine ligase family. Requires Mg(2+) as cofactor. Mn(2+) is required as a cofactor.

It localises to the cytoplasm. The enzyme catalyses 2 D-alanine + ATP = D-alanyl-D-alanine + ADP + phosphate + H(+). The protein operates within cell wall biogenesis; peptidoglycan biosynthesis. Its function is as follows. Cell wall formation. This is D-alanine--D-alanine ligase from Ralstonia pickettii (strain 12J).